We begin with the raw amino-acid sequence, 445 residues long: Acetylcholine-gated chloride channel subunit acc-2 (445 aa).

The signal sequence occupies residues 1–26; the sequence is MIFTLLSTLPVLIITTELDYSELVHS. The Extracellular segment spans residues 27–258; it reads AELVSSSSYI…LHVTIIFERR (232 aa). Asn-46, Asn-59, Asn-121, and Asn-162 each carry an N-linked (GlcNAc...) asparagine glycan. A disulfide bond links Cys-177 and Cys-191. Residue Asn-218 is glycosylated (N-linked (GlcNAc...) asparagine). A helical membrane pass occupies residues 259–279; the sequence is FIWYFMQAYLPTYLTIFISWI. Residues 280–286 are Cytoplasmic-facing; that stretch reads SFSLGSR. The helical transmembrane segment at 287–307 threads the bilayer; sequence AIPARTMLGVNSLLAIVFSFG. At 308 to 326 the chain is on the extracellular side; the sequence is NIMRNLPRVSYIKGIDVWM. The chain crosses the membrane as a helical span at residues 327–347; sequence LVSMTFIFCSLLELAIVGFMV. Topologically, residues 348–407 are cytoplasmic; sequence RDETVAKKKQQKKISGNISREESPHGIISERRFMFPPGCSESSKSLSSCTSGWTPERIDS. A helical transmembrane segment spans residues 408 to 428; it reads ISSVMFPFSFFVFNIIYWFYY. The Extracellular segment spans residues 429–445; it reads IHRKEIIKQNLINRVDG.

The protein belongs to the ligand-gated ion channel (TC 1.A.9) family. In terms of assembly, homopentamer (in vitro). May interact with either acc-3 or acc-4; the interactions do not result in significant heteropentameric ion channel activity. Expressed in RIA, RIG, PHA and AIZ glutamatergic neurons, URX and RIH cholinergic neurons, and in male-specific MCM neurons.

It is found in the cell membrane. In terms of biological role, acetylcholine-gated chloride channel subunit. Currents in channels are triggered in response to acetylcholine. Channel properties may be modulated by the formation of homomeric and heteromeric channels. The protein is Acetylcholine-gated chloride channel subunit acc-2 of Caenorhabditis elegans.